The chain runs to 85 residues: Large ribosomal subunit protein bL27 (85 aa).

Positions 1 to 22 (MAHKKAGGSTRNGRDSESKRLG) are disordered.

This sequence belongs to the bacterial ribosomal protein bL27 family.

The protein is Large ribosomal subunit protein bL27 of Teredinibacter turnerae (strain ATCC 39867 / T7901).